The chain runs to 264 residues: NFAT activation molecule 1 (264 aa).

A signal peptide spans 1-37 (MESWLLRRGARVRCLHPPSWLPAWCFLCLLPVPQTLQ). Residues 38 to 159 (LTGLVSLTHT…QPPAFKVQEA (122 aa)) lie on the Extracellular side of the membrane. Residues 49-145 (LPIMVSLANT…QSDGVVILVR (97 aa)) enclose the Ig-like V-type domain. Cysteines 64 and 110 form a disulfide. Asn105 and Asn118 each carry an N-linked (GlcNAc...) asparagine glycan. The chain crosses the membrane as a helical span at residues 160–180 (LMLGFTSLMSVLGVLGTALLL). Topologically, residues 181–264 (WKKKQISVLG…NEFNLVYENL (84 aa)) are cytoplasmic. The ITAM domain occupies 212–232 (ESVYTSLQRRETEVYACMKEE). 2 positions are modified to phosphotyrosine: Tyr215 and Tyr226.

No direct interaction with the B-cell antigen receptor (BCR). Interacts with SYK; probably involved in BCR signaling. Interacts with ZAP70. In terms of processing, N-glycosylated. In terms of tissue distribution, highly expressed in the spleen, expressed by both B- and CD4+ and CD8+ T-cells, as well as non-T- and non-B-cells, including macrophages and neutrophils. Expressed at low levels, if any, in non-immune tissue.

It localises to the cell membrane. Functionally, may function in immune system as a receptor which activates via the calcineurin/NFAT-signaling pathway the downstream cytokine gene promoters. Activates the transcription of IL-13 and TNF-alpha promoters. May be involved in the regulation of B-cell, but not T-cell, development. The chain is NFAT activation molecule 1 (Nfam1) from Mus musculus (Mouse).